The primary structure comprises 640 residues: G protein-coupled receptor kinase 1 (640 aa).

Residues 1-201 (MEIENIVANT…LEKRPVDKHT (201 aa)) form an N-terminal region. An RGS domain is found at 52-187 (YAFVVEKQPI…IQTMYFHRFL (136 aa)). The region spanning 202–469 (FRLYRVLGKG…AEEIRAHPFF (268 aa)) is the Protein kinase domain. Residues 208–216 (LGKGGFGEV) and lysine 231 contribute to the ATP site. Aspartate 327 acts as the Proton acceptor in catalysis. Residues 479–544 (EPVPWKKMEA…GCVSIPWQSE (66 aa)) enclose the AGC-kinase C-terminal domain. The tract at residues 610–640 (GVDQQQPSTSAKPAAVRSSRAASASGRTSMI) is disordered. Low complexity predominate over residues 619–640 (SAKPAAVRSSRAASASGRTSMI).

It belongs to the protein kinase superfamily. AGC Ser/Thr protein kinase family. GPRK subfamily.

It catalyses the reaction [G-protein-coupled receptor] + ATP = [G-protein-coupled receptor]-phosphate + ADP + H(+). In terms of biological role, specifically phosphorylates the activated forms of G protein-coupled receptors. The chain is G protein-coupled receptor kinase 1 (grk-1) from Caenorhabditis briggsae.